Consider the following 314-residue polypeptide: Atrochrysone carboxyl ACP thioesterase AgnL7 (314 aa).

Zn(2+) is bound by residues His103, His105, Asp107, and His108. The active-site Proton donor/acceptor is Asp107.

This sequence belongs to the metallo-beta-lactamase superfamily. Zn(2+) serves as cofactor.

It catalyses the reaction atrochrysone carboxyl-[ACP] + H2O = atrochrysone carboxylate + holo-[ACP] + H(+). It participates in secondary metabolite biosynthesis. In terms of biological role, atrochrysone carboxyl ACP thioesterase; part of the gene cluster that mediates the biosynthesis of agnestins, dihydroxy-xanthone metabolites. The pathway begins with the assembly and cyclization of atrochrysone thioester by the non-reducing polyketide synthase Agnpks1. The atrochrysone carboxyl ACP thioesterase AgnL7 then breaks the thioester bond and releases the atrochrysone carboxylic acid as the first enzyme-free intermediate. The decarboxylase AgnL1 then catalyzes the concerted decarboxylation-elimination required to convert atochrysone carboxylic acid into emodin anthrone, which is further oxidized to emodin by the anthrone oxygenase AgnL2. Emodin then undergoes reduction catalyzed by the oxidoreductase AgnL4 to yield the dihydroquinone tautomer which is the substrate for reduction by the short chain dehydrogenase AgnL6 reduction to produce hydroxyketone, followed by AgnL8 dehydration and likely spontaneous autoxidation to chrysophanol. Baeyer-Villiger oxidation by the oxidase AgnL3 leads to monodictyphenone via cleavage of the C-10/C-10a bond of chrysophanol. Alternative cleavage at the C-4a/C-10 bond of chrysophanol also leads to the formation some cephalone F. Further conversion to agnestins A and B, requires reduction to dihydro-monodictyphenone, oxidation to agnestin C probably via an epoxide, and rearrangement to either agnestin A or agnestin B directly, although agnestin A or agnestin B can also interconvert. Within the cluster, AgnR1 is the only unassigned oxidoreductase present which could be involved in this conversion. However, AgnR1 seems not to be involved in this step, and thus genes involved in the proposed oxidation/reduction may be located elsewhere on the genome. Further agnestin A derivatives are probably formed by spontaneous decarboxylations, dehydrations and methanolysis reactions. This is Atrochrysone carboxyl ACP thioesterase AgnL7 from Paecilomyces divaricatus (Penicillium divaricatum).